We begin with the raw amino-acid sequence, 280 residues long: Borealin (280 aa).

The tract at residues M1 to I58 is required for interaction with INCENP. The tract at residues M1–T88 is required for centromere localization. The tract at residues M1–A140 is required for interaction with SENP3. Residues V10–K109 are required to form a minimal CPC core complex that localizes to the central spindle and midbody and properly executes the role of the CPC during cytokinesis. The interval K20 to G78 is required for interaction with INCENP and BIRC5. 2 positions are modified to phosphothreonine; by TTK: T88 and T94. Phosphothreonine is present on T106. S110 is modified (phosphoserine). Residues E130 to T169 are disordered. K135 participates in a covalent cross-link: Glycyl lysine isopeptide (Lys-Gly) (interchain with G-Cter in SUMO2). Over residues R141–T152 the composition is skewed to basic residues. Position 165 is a phosphoserine; by AURKB (S165). T169 bears the Phosphothreonine; by TTK mark. 2 positions are modified to phosphothreonine: T189 and T204. Phosphoserine is present on residues S219 and S224. Position 230 is a phosphothreonine; by TTK (T230). S238 and S244 each carry phosphoserine.

Belongs to the borealin family. In terms of assembly, may form homooligomers and homodimers. Component of the chromosomal passenger complex (CPC) composed of at least BIRC5/survivin, CDCA8/borealin, INCENP, AURKB or AURKC; in the complex forms a triple-helix bundle-based subcomplex with INCENP and BIRC5. Interacts with SENP3, UBE2I and RANBP2. Interacts (phosphorylated) with SGO1 and SGO2; the association is dependent on CDK1. Phosphorylated by TTK, essentially at Thr-88, Thr94, Thr-169 and Thr-230. Phosphorylation (probably by CDK1) promotes targeting of the CPC to centromeric DNA. In terms of processing, sumoylated by UBE2I and RANBP2. Desumoylated by SENP3 through the removal of SUMO2 and SUMO3.

Its subcellular location is the nucleus. The protein localises to the nucleolus. It is found in the cytoplasm. It localises to the chromosome. The protein resides in the centromere. Its subcellular location is the cytoskeleton. The protein localises to the spindle. Its function is as follows. Component of the chromosomal passenger complex (CPC), a complex that acts as a key regulator of mitosis. The CPC complex has essential functions at the centromere in ensuring correct chromosome alignment and segregation and is required for chromatin-induced microtubule stabilization and spindle assembly. In the complex, it may be required to direct the CPC to centromeric DNA. This chain is Borealin (CDCA8), found in Pongo abelii (Sumatran orangutan).